Reading from the N-terminus, the 720-residue chain is 1-deoxy-D-xylulose-5-phosphate synthase 1, chloroplastic (720 aa).

The transit peptide at 1-51 (MALTTFSISRGGFVGALPQEGHFAPAAAELSLHKLQSRPHKARRRSSSSIS) directs the protein to the chloroplast. Over residues 35–46 (LQSRPHKARRRS) the composition is skewed to basic residues. The disordered stretch occupies residues 35-74 (LQSRPHKARRRSSSSISASLSTEREAAEYHSQRPPTPLLD). Over residues 56–65 (TEREAAEYHS) the composition is skewed to basic and acidic residues. Thiamine diphosphate-binding positions include His-142 and 183 to 185 (GHS). Mg(2+) is bound at residue Asp-214. Thiamine diphosphate is bound by residues 215–216 (GA), Asn-243, Tyr-364, and Glu-446. Asn-243 provides a ligand contact to Mg(2+).

This sequence belongs to the transketolase family. DXPS subfamily. In terms of assembly, homodimer. It depends on Mg(2+) as a cofactor. Requires thiamine diphosphate as cofactor.

It is found in the plastid. Its subcellular location is the chloroplast stroma. It catalyses the reaction D-glyceraldehyde 3-phosphate + pyruvate + H(+) = 1-deoxy-D-xylulose 5-phosphate + CO2. The protein operates within metabolic intermediate biosynthesis; 1-deoxy-D-xylulose 5-phosphate biosynthesis; 1-deoxy-D-xylulose 5-phosphate from D-glyceraldehyde 3-phosphate and pyruvate: step 1/1. Catalyzes the acyloin condensation reaction between C atoms 2 and 3 of pyruvate and glyceraldehyde 3-phosphate to yield 1-deoxy-D-xylulose-5-phosphate (DXP). Is a limiting enzyme for plastidic isoprenoid biosynthesis and essential for chloroplast development. This chain is 1-deoxy-D-xylulose-5-phosphate synthase 1, chloroplastic (CLA1), found in Oryza sativa subsp. japonica (Rice).